Consider the following 3977-residue polypeptide: MSVEEPIAVIGSGLRFPGSSTSPSKLWDLLTKPRDLLTRIPENRFNADAHHHPNPDHHGTLNVTESYFIDQDHRHFDANFFNIKAIEVSAIDPQQRLLMEVVYESLEAAGLSIESLAGSQTGVYVGQMCGDHSDLLNSDVNALPTYTATGNARSIMSNRISYFFDWHGPSMTIDTACSSSLVAVHQAVQLLRSGDSRVTVAAGTNMILAPMQYVGASKLHMLAADSRSRMWDVDASGYARGEGVAAVILKRLSDAIADGDNIECVIRSSGVNQDGRTKGITVPSSTAQRDLIFRTYAKAGLDPLNPKERCQYFEAHGTGTAAGDPKEAEAISQSFFYPDENVKSKDEVPLYVGSIKTVIGHTEGTAGLAGLIKASLALQHGVIPPNLLFNKLHPNIEPFYTNLEVPTSLKTWPALPEGIPRRASINSFGFGGTNAHVILENYTTPTPQETSSAASQQFTPFVFSAASEKSLRGILGDYMEYLSANPDVSLKDLSYTLYGRRSEHAIRTSFSASSVSDLQAKIKERVREGSNGQNIGVRAKVSSSMPRLLGVFTGQGAQWPTMSRELVLHSPYARKVVQELEAVLQTLPEPERPHWSLMDELLCDASKSRLDSAQIAQPLCTVVQIILFDLIQAAGVKFEAVVGHSSGEIAAAYAAGCITRDDAVKIAYYRGYFTHHTPSSKPGAMMAAGTSFEDANELCNLPMFKGRLAVAAINSSTSVTISGDRDAIEQAKEILEDEQKFARLLKVDKAYHSSHMIPCSTGYVEALKGCNIQPQQGAKDCTWYSSTYEKREMHGDEDLAGQYWADNMVRPVLFSQAVVSASAGGAFDLGVEVGPHPALKGPAVQTIQETQKDPILYTGVIHRGKNDTEAVSDALGYIWSQLSTYKLDLRSFDSLVSGDNSRSVVPDLPTYHWDHDTLYWHNTRASKAFLGRKTGTNPLLGTRTTDIMEHEMRWRNLLRLNEKPWINGHQLQGQVVYPATAYIATAVEAARFIVPNEEDVAVIEVHDFSLGKPLVFSEGDSGIETVFAVDGITMTSENTYSASFVFHASSSAEADQLSTHATGRITVTLGESSSSLFPTRQPDLPNLVSIPQDRFYASLEPLGYSYSGWFRTLSSIKRRMNFSSSQITVPPQDDEPEKMLLHPALLDSALQGIFLAYCWPGDGSLEQLHVPTGIKTFRVNAGLCRQTLIPSSDVSACSQLTSNPIATRQLNGDVEIYAPDGTGLVQMEGIKVVAFSEATADMDRAIFSENVWGVAAPSCELVMGDQRATEEDYEFSYAMERVSINYMKKTVEEFPEEKRKTMGLEWHFERMFDFFNDVLTTVKAGSRSCAQSEWVNDDKETIAALKAKHGHRVDMQLACQVGDHLAPVLRGETTILEHMTKDNLLNRFYEVGLGLKEFSYLLGKTVKQVVHRDPRMKILEIGAGTGGATKLIMSDIGRSFASYTYTDISTGFFETAQEVFSLFSDKMIFKTLDIEKDIVQQGYEEHTYDLVVASLVLHATTDIHRTLTNARRLLKPGGQLIILEVSNNDVSRVGFMMCALPGWWLGQNDGRTLSPCISTLEWHNALLQSGFSGIDSSTPESDAIPYPLAIIVSQAVDDRVALLREPLSAAGLQAAVDTELDLVLVGGQTLNTTRLVQGILRLLPTGTKHTIFKTLCDVDVAKVSPKSAILVLTELDEPVFKRLTDKALKGLQALFESQRTVLWITQGSRSENPFMNMSVGLGRSLVLENPDLTLQFLDLEVNSKPDPRSLLESLMRLRQGDILKRGGQLEELHWTNEHELAYENGNLVLSRVYQSKALNNRYNAFKRTITETVTLDSDSAPVKLSSDASSRHTLMHDASLASRLLDSQSLHGTGAEVLINVTHSLLAPIATRPDTAYLVLGVNLSTGASTIAVTPTNGSRALVSSEKSIEVTILPGNEISFLSSLAVELRSVSILSVCRPGSTLLVHEPTPAIASSILKRAGDTNIKVHFSTASQPKSADDWIFIDVYSPKRVVVASIPADVSTLVDCAARQGKNFSSCGSLIASCLPATSLQINLDGASPLQQMLEPSGAHSIQHLLPDVVQRALIETAESSAGQPVNELVTLDLEQLVGSDVDQSQQAIVSWTGTAKIPVQLSTVESQVKFRPDRTYVLFGLTSDLAQSICDWMASRGARNIVLTSRNPKIEYQWVELLAKKGVRLEAFANDITDKAALSTLVENLRHNYPPIAGICHGAMVLDDTSFFEMPFEKMQKVLGPKVKGAIFLDEIFQNDVLDFFVFFSSVTAIAGNRGQSAYTTANMFMSSLVTQRRQRGLAASILHIGAVMGVGYINRGFSDAIFAALRKTGFMMMSEREFHLCFAEAVVASHPCSDLNPEVITALETIRSTEVRPPWADFPRFQHCVQLEEAGDKKEKKKTAAVSVKIRLQEAVNASEVFEIISGAFFQKLQISLQLPSETEKAHVLASGLDDLGVDSLIAVEIRSWFGKEIETEIPVFKVLSGGSVAQLLEYAIDNMPAKLVPHSNGEQGTVSDSGSTNIQLTPASTPSVPSVNLASDSTGSSQVGEDVDSSVDMVVTPLETPFEDAEIKRTLSITEIEPPAEKTPPPNFEKIIPMSPGQSRFWFLKHLMKDQTTANSTILVAIDGNLRLDSLEDAVRKIAAHHEAFRTSFFTDENHKPVQAISALSRLFLERKVVASESQVKEEFEKLKNHVYDLEHGETLRLVHLCLTPTKSYLVIGSHHITLDGISLEVFLQTLQHAYNGQPLSKNTFQYSDYSEKLRQEISSGSLQSDIEYWKVELANHPPALPLLPFSSTKTRQPLEEYSHVSLNRIVPAALAKQIQETCHRLKANIFHFYLGVFEILLFKLLGTSDVCIGMADANRWDDRVAQSIGMYLNLLPLRFHLDSTQSFEAVLKETRRKAYLAMSHSRLPFDVLLENVECDRSTSFSPLFQAFINYRQGVSETRKFGGATGTTTEISLPRAGYDISLDIIENPGQDTRVTFMLQKTLYGEEETTKVLDLYFKLLGSVSRMSGQSLKDISLFSKEDIHNAVQLGQGPNSPSTWPATLPARIENIIAEHPDTISIKQVTGQSWSYQQLNAEVNRISSALLGAGVTKGSVVAVFQDASASQVFSLLAIYRIGAIYAPLDVNIPAERLQVIVAECKPSAVLVNESTVNNSSDLALPSSTHVLEVSSLPNGAHVPAANLTSSDPAAMLFTSGTSGVPKGVVLSHGNFRNHVESLTVTHGFGSETVLQQSSVGFDMSLNQIFIALANAGTLVIVPESLRKDFSSLSQIILDHRVTYTSATPSEYLAWYRHGADNLSKSGSWKFATSGGEKFSAELIDVFRQLSSQFLQSLRIFNAYGPTECSLSSNELEVNLNTPKITAGRTLPNYAVCIVDEDSNPQPIGFPGEIYISGAGVAIGYLNNTEETTRKFIKTSFSGKAYRTGDKGVLHADGALEILGRIDGDTQVKLRGLRIELQDVEKSILTASNGQLNEVVVTPVGTPTMLVAHAVLSSTVPTANTQSFLQELVSSLPLPQYMRPSFIRPIDRIPLTTSGKTDRKALQALGLPFASVQEEDEFSLTPTEDKLARVWDSILPLQSQGLHTLTSASDFFQVGGNSMLLIDLRNAVRREFDIDIPLLRLFEHSSISAMASLITPASSESSHSIDWASEVAIPPTLLSSQPKSSANCPHHPPQTVLLTGATGFLGHNVLKGLVEDSNITKIHCIAVRDSTKLASSIDSEKIVIHTGDLSLPRLGLSTAAFAALSNSADVIIHNGADVSFLKTYKTLRAANVEATKALVQIALPRKVPVHFVSTGTVGKLIGGESLEPTSLASYPPSEGFKDGYAATKWVSEVLLENVGNELGLPVVIHRPSSITGEGAGESDIVPNVVRYANLLKAAPESKGWTGFVDLVSVQNVVDGLLGSVTGDRGNGVQYIHHSGENVIPANRIGEMLQKDGKEEWDVLDMTEWVDKAIQKGMNPLIGEFLKNAGKGKGLQIGQRLLKE.

Residues 4–441 form the Ketosynthase family 3 (KS3) domain; that stretch reads EEPIAVIGSG…GTNAHVILEN (438 aa). Active-site for beta-ketoacyl synthase activity residues include cysteine 177, histidine 316, and histidine 361. Positions 551–867 constitute a Malonyl-CoA:ACP transacylase (MAT) domain; sequence VFTGQGAQWP…TGVIHRGKND (317 aa). The tract at residues 937–1072 is N-terminal hotdog fold; that stretch reads NPLLGTRTTD…GRITVTLGES (136 aa). The PKS/mFAS DH domain occupies 937-1241; that stretch reads NPLLGTRTTD…VVAFSEATAD (305 aa). Histidine 969 serves as the catalytic Proton acceptor; for dehydratase activity. Residues 1087-1241 form a C-terminal hotdog fold region; it reads LVSIPQDRFY…VVAFSEATAD (155 aa). The active-site Proton donor; for dehydratase activity is the aspartate 1147. A methyltransferase (cMeT) domain region spans residues 1286 to 1580; the sequence is YMKKTVEEFP…FSGIDSSTPE (295 aa). The Ketoreductase (KR) domain maps to 2128–2301; sequence TYVLFGLTSD…AASILHIGAV (174 aa). Positions 2409–2490 constitute a Carrier 1 domain; it reads SEVFEIISGA…QLLEYAIDNM (82 aa). O-(pantetheine 4'-phosphoryl)serine is present on serine 2450. The disordered stretch occupies residues 2497-2542; it reads HSNGEQGTVSDSGSTNIQLTPASTPSVPSVNLASDSTGSSQVGEDV. Residues 2499–2538 are compositionally biased toward polar residues; that stretch reads NGEQGTVSDSGSTNIQLTPASTPSVPSVNLASDSTGSSQV. The tract at residues 2584 to 3018 is condensation; it reads EKIIPMSPGQ…LKDISLFSKE (435 aa). The interval 3048–3437 is adenylation; that stretch reads IAEHPDTISI…GALEILGRID (390 aa). Residues 3552-3632 enclose the Carrier 2 domain; that stretch reads FSLTPTEDKL…AMASLITPAS (81 aa). The residue at position 3592 (serine 3592) is an O-(pantetheine 4'-phosphoryl)serine. The Thioester reductase (TE) domain occupies 3672–3890; it reads LTGATGFLGH…FVDLVSVQNV (219 aa).

It in the C-terminal section; belongs to the NRP synthetase family. Pantetheine 4'-phosphate serves as cofactor.

The protein operates within mycotoxin biosynthesis. In terms of biological role, hybrid PKS-NRPS synthetase; part of the gene cluster that mediates the biosynthesis of GKK1032, fungal natural products containing a macrocyclic para-cyclophane connected to a decahydrofluorene ring system that show potent antitumor activities. Within the pathway, the PKS-NRPS gkaA, with the help of the trans-enoyl reductase gkaC, synthesize the polyketide-tyrosyl acyl thioester product which can be reductively off-loaded by the terminal reductase (R) domain in gkaA. The PKS module of gkaA acts in combination with the trans-acting enoyl reductase gkaC to produce a methylated polyketide attached to the ACP domain. In parallel, the adenylation (A) domain of the NRPS module activated L-tyrosine, which is then transferred to the ACP domain. The condensation (C) domain subsequently links this group to the polyketide chain, forming an enzyme-bound amide. The alpha/beta hydrolase gkaG is then required to catalyze the subsequent Knoevenagel condensation that affords the 3-pyrrolin-2-one ring, whereas the three proteins gkaB, gkadX and gkaZ then function synergistically to form the cyclophane. The polypeptide is Hybrid PKS-NRPS synthetase gkaA (Penicillium citrinum).